The primary structure comprises 99 residues: MGYKGKWNERNKNPYVNEKILKKIIKMNETGERKIIKVWDRSCTITQEMVGHTIAVYNGQKFIPVYIQPEMVGHKLGEFSLTRTFRGHPDKSAKVVKKK.

Belongs to the universal ribosomal protein uS19 family.

Its function is as follows. Protein S19 forms a complex with S13 that binds strongly to the 16S ribosomal RNA. This is Small ribosomal subunit protein uS19 from Sulfurihydrogenibium sp. (strain YO3AOP1).